The sequence spans 480 residues: METIFAQSSAFGKAGVAVFRISGPKSLEVLQLLTGRADFKPRIMYYQQITVPKTIVNSASFAYKEPRVEPITNRRATSDIVSEGGSIDYKELIDNAMVVYFKSPNSFTGEDVVEIHTHGSKAISIMLINALLNIADIRLAEAGEFTKRAFLNNKFDLTAAEGIADLINAETIMQHRQAIRQASGGLEELYNNWRTQLLKIISLLEAYIDFPDEDIPDSVLNDVNNTHKNLVNEISNYLNDNRRGELLNSGLKLAIIGPPNVGKSSLLNFLMQRDIAIVSNIAGTTRDIIEGHLDIGGYPIILQDTAGIREESSDIIEQEGIKRAIHSAKTADIKIIMFDAEKLDSSINEDIMNLINENTITIINKIDLIEPNKIFSIENKYKCLRVSVKNNIALSSILKNIENIAENMAGFTETPYITNQRHRHYLKQALSHLTAFSLDNDLVLATEDIRMTARCIGAITGVINIEEILGEIFKNFCIGK.

Positions 20, 114, and 154 each coordinate (6S)-5-formyl-5,6,7,8-tetrahydrofolate. The TrmE-type G domain occupies 250-406; it reads GLKLAIIGPP…ILKNIENIAE (157 aa). Asn260 serves as a coordination point for K(+). Residues 260 to 265, 279 to 285, and 304 to 307 contribute to the GTP site; these read NVGKSS, SNIAGTT, and DTAG. Ser264 is a Mg(2+) binding site. Positions 279, 281, and 284 each coordinate K(+). Position 285 (Thr285) interacts with Mg(2+). Lys480 serves as a coordination point for (6S)-5-formyl-5,6,7,8-tetrahydrofolate.

The protein belongs to the TRAFAC class TrmE-Era-EngA-EngB-Septin-like GTPase superfamily. TrmE GTPase family. In terms of assembly, homodimer. Heterotetramer of two MnmE and two MnmG subunits. K(+) is required as a cofactor.

Its subcellular location is the cytoplasm. In terms of biological role, exhibits a very high intrinsic GTPase hydrolysis rate. Involved in the addition of a carboxymethylaminomethyl (cmnm) group at the wobble position (U34) of certain tRNAs, forming tRNA-cmnm(5)s(2)U34. This Rickettsia felis (strain ATCC VR-1525 / URRWXCal2) (Rickettsia azadi) protein is tRNA modification GTPase MnmE.